An 828-amino-acid chain; its full sequence is Glycerol-3-phosphate acyltransferase (828 aa).

Positions 310–315 (HRSHID) match the HXXXXD motif motif.

This sequence belongs to the GPAT/DAPAT family.

It localises to the cell inner membrane. The enzyme catalyses sn-glycerol 3-phosphate + an acyl-CoA = a 1-acyl-sn-glycero-3-phosphate + CoA. Its pathway is phospholipid metabolism; CDP-diacylglycerol biosynthesis; CDP-diacylglycerol from sn-glycerol 3-phosphate: step 1/3. In Pseudomonas putida (strain ATCC 47054 / DSM 6125 / CFBP 8728 / NCIMB 11950 / KT2440), this protein is Glycerol-3-phosphate acyltransferase.